A 348-amino-acid chain; its full sequence is Peptidyl-Lys metalloendopeptidase (348 aa).

An N-terminal signal peptide occupies residues 1–18; sequence MFSSVMVALVSLAVAVSA. The propeptide occupies 19 to 181; it reads NPGLSLKVSG…RATPTLTRPV (163 aa). Cystine bridges form between Cys186-Cys256 and Cys258-Cys278. Residue Thr223 is glycosylated (O-linked (Man) threonine; partial). His298 is a binding site for Zn(2+). Glu299 is a catalytic residue. Positions 302 and 311 each coordinate Zn(2+).

It depends on Zn(2+) as a cofactor.

The protein resides in the secreted. It catalyses the reaction Preferential cleavage in proteins: -Xaa-|-Lys- (in which Xaa may be Pro).. Its activity is regulated as follows. Inhibited by chelating agents such as EDTA and 1,10-phenanthroline. In Grifola frondosa (Maitake), this protein is Peptidyl-Lys metalloendopeptidase (MEP).